Consider the following 225-residue polypeptide: MMYHIPGVLSPKDVARFREQLEQAEWVDGRVTTGAQGAQVKNNQQVDTRSALYAALQNEVLNAVNQHALFFAAALPRTLSTPLFNRYQNNETYGFHVDGAVRSHPQNGWMRTDLSATLFLSDPQSYDGGELVVNDTFGQHRVKLPAGDLVLYPSSSLHCVTPVTRGVRVASFMWIQSMIRDDKKRAMLFELDTNIQSLKSRHGESEEILSLLNLYHNLLREWSEI.

A Fe2OG dioxygenase domain is found at 78-177 (TLSTPLFNRY…RVASFMWIQS (100 aa)). Fe cation-binding residues include His96, Asp98, and His158. Residue Arg168 coordinates 2-oxoglutarate.

Fe(2+) is required as a cofactor. Requires L-ascorbate as cofactor.

The chain is PKHD-type hydroxylase YbiX from Escherichia fergusonii (strain ATCC 35469 / DSM 13698 / CCUG 18766 / IAM 14443 / JCM 21226 / LMG 7866 / NBRC 102419 / NCTC 12128 / CDC 0568-73).